A 370-amino-acid polypeptide reads, in one-letter code: 3-isopropylmalate dehydrogenase (370 aa).

76–89 is a binding site for NAD(+); sequence GPKWDQNPSELRPE. Residues R96, R106, R134, and D224 each coordinate substrate. Positions 224, 248, and 252 each coordinate Mg(2+). 282–294 contributes to the NAD(+) binding site; it reads GSAPDIAGQNIAN.

This sequence belongs to the isocitrate and isopropylmalate dehydrogenases family. LeuB type 1 subfamily. Homodimer. Mg(2+) serves as cofactor. The cofactor is Mn(2+).

The protein resides in the cytoplasm. It catalyses the reaction (2R,3S)-3-isopropylmalate + NAD(+) = 4-methyl-2-oxopentanoate + CO2 + NADH. The protein operates within amino-acid biosynthesis; L-leucine biosynthesis; L-leucine from 3-methyl-2-oxobutanoate: step 3/4. Catalyzes the oxidation of 3-carboxy-2-hydroxy-4-methylpentanoate (3-isopropylmalate) to 3-carboxy-4-methyl-2-oxopentanoate. The product decarboxylates to 4-methyl-2 oxopentanoate. This Bacillus licheniformis (strain ATCC 14580 / DSM 13 / JCM 2505 / CCUG 7422 / NBRC 12200 / NCIMB 9375 / NCTC 10341 / NRRL NRS-1264 / Gibson 46) protein is 3-isopropylmalate dehydrogenase.